A 472-amino-acid polypeptide reads, in one-letter code: Siroheme synthase (472 aa).

The segment at 1–203 is precorrin-2 dehydrogenase /sirohydrochlorin ferrochelatase; sequence MNYLPIFIDI…GKIQEAKADL (203 aa). NAD(+) contacts are provided by residues 22 to 23 and 43 to 44; these read DI and KS. Serine 128 carries the phosphoserine modification. The segment at 216–472 is uroporphyrinogen-III C-methyltransferase; sequence GEVYLVGGGP…SSKKSYLFGG (257 aa). Residue proline 225 coordinates S-adenosyl-L-methionine. Aspartate 248 acts as the Proton acceptor in catalysis. The active-site Proton donor is lysine 270. Residues 301–303, isoleucine 306, 331–332, methionine 383, and glycine 412 each bind S-adenosyl-L-methionine; these read GGD and TA.

This sequence in the N-terminal section; belongs to the precorrin-2 dehydrogenase / sirohydrochlorin ferrochelatase family. It in the C-terminal section; belongs to the precorrin methyltransferase family.

It catalyses the reaction uroporphyrinogen III + 2 S-adenosyl-L-methionine = precorrin-2 + 2 S-adenosyl-L-homocysteine + H(+). The catalysed reaction is precorrin-2 + NAD(+) = sirohydrochlorin + NADH + 2 H(+). The enzyme catalyses siroheme + 2 H(+) = sirohydrochlorin + Fe(2+). It participates in cofactor biosynthesis; adenosylcobalamin biosynthesis; precorrin-2 from uroporphyrinogen III: step 1/1. The protein operates within cofactor biosynthesis; adenosylcobalamin biosynthesis; sirohydrochlorin from precorrin-2: step 1/1. It functions in the pathway porphyrin-containing compound metabolism; siroheme biosynthesis; precorrin-2 from uroporphyrinogen III: step 1/1. Its pathway is porphyrin-containing compound metabolism; siroheme biosynthesis; siroheme from sirohydrochlorin: step 1/1. It participates in porphyrin-containing compound metabolism; siroheme biosynthesis; sirohydrochlorin from precorrin-2: step 1/1. Functionally, multifunctional enzyme that catalyzes the SAM-dependent methylations of uroporphyrinogen III at position C-2 and C-7 to form precorrin-2 via precorrin-1. Then it catalyzes the NAD-dependent ring dehydrogenation of precorrin-2 to yield sirohydrochlorin. Finally, it catalyzes the ferrochelation of sirohydrochlorin to yield siroheme. The protein is Siroheme synthase of Ruthia magnifica subsp. Calyptogena magnifica.